Reading from the N-terminus, the 353-residue chain is C-X-C chemokine receptor type 4 (353 aa).

Residues 1 to 22 form an important for chemokine binding and signaling region; it reads MEGIRIFTSDNYTEDDLGSGDY. The Extracellular segment spans residues 1 to 39; the sequence is MEGIRIFTSDNYTEDDLGSGDYDSMKEPCFREENAHFNR. Asn-11 carries N-linked (GlcNAc...) asparagine glycosylation. At Tyr-12 the chain carries Sulfotyrosine. The O-linked (Xyl...) (chondroitin sulfate) serine glycan is linked to Ser-19. Tyr-22 is subject to Sulfotyrosine. Cystine bridges form between Cys-29-Cys-275 and Cys-110-Cys-187. A helical transmembrane segment spans residues 40 to 64; sequence IFLPTVYSIIFLTGIVGNGLVILVM. Over 65–78 the chain is Cytoplasmic; the sequence is GYQKKLRSMTDKYR. The helical transmembrane segment at 79–100 threads the bilayer; sequence LHLSVADLLFVLTLPFWAVDAV. The segment at 95 to 98 is chemokine binding; sequence WAVD. At 101–111 the chain is on the extracellular side; the sequence is ANWYFGKFLCK. A helical transmembrane segment spans residues 112–131; sequence AVHVIYTVNLYSSVLILAFI. Residues 114 to 118 form a chemokine binding region; sequence HVIYT. Topologically, residues 132–155 are cytoplasmic; that stretch reads SLDRYLAIVHATNSQKPRKLLAEK. The Important for signaling motif lies at 134–136; the sequence is DRY. Residues 136 to 148 are involved in dimerization; when bound to chemokine; the sequence is YLAIVHATNSQKP. A helical transmembrane segment spans residues 156-175; sequence VVYVGVWLPAVLLTIPDLIF. At 176–196 the chain is on the extracellular side; that stretch reads ADIKEVDERYICDRFYPSDLW. The segment at 187–191 is chemokine binding, important for signaling; it reads CDRFY. The interval 192 to 211 is involved in dimerization; sequence PSDLWLVVFQFQHIVVGLLL. Residues 197 to 217 form a helical membrane-spanning segment; it reads LVVFQFQHIVVGLLLPGIVIL. Residues 218–242 are Cytoplasmic-facing; the sequence is SCYCIIISKLSHSKGYQKRKALKTT. The chain crosses the membrane as a helical span at residues 243-262; it reads VILILTFFACWLPYYIGISI. The Extracellular segment spans residues 263–283; that stretch reads DSFILLEIIQQGCEFESTVHK. An involved in dimerization region spans residues 267-269; that stretch reads LLE. Residues 284–303 form a helical membrane-spanning segment; it reads WISITEALAFFHCCLNPILY. Residues 304–353 lie on the Cytoplasmic side of the membrane; sequence AFLGAKFKTSAQHALTSVSRGSSLKILSKGKRGGHSSVSTESESSSFHSS. Phosphoserine occurs at positions 320 and 322. Residues Ser-325 and Ser-326 each carry the phosphoserine; by PKC and GRK6 modification. The tract at residues 330-353 is disordered; sequence LSKGKRGGHSSVSTESESSSFHSS. The residue at position 331 (Ser-331) is a Phosphoserine; by GRK6. A Glycyl lysine isopeptide (Lys-Gly) (interchain with G-Cter in ubiquitin) cross-link involves residue Lys-332. A compositionally biased stretch (low complexity) spans 338 to 353; sequence HSSVSTESESSSFHSS. Ser-340 is subject to Phosphoserine; by GRK6. 2 positions are modified to phosphoserine: Ser-349 and Ser-352.

It belongs to the G-protein coupled receptor 1 family. In terms of assembly, monomer. Can form homodimers. Interacts with CD164. Interacts with ARRB2; the interaction is dependent on the C-terminal phosphorylation of CXCR4 and allows activation of MAPK1 and MAPK3. Interacts with ARR3; the interaction is dependent on the C-terminal phosphorylation of CXCR4 and modulates calcium mobilization. Interacts with RNF113A; the interaction, enhanced by CXCL12, promotes CXCR4 ubiquitination and subsequent degradation. Interacts (via the cytoplasmic C-terminal) with ITCH (via the WW domains I and II); the interaction, enhanced by CXCL12, promotes CXCR4 ubiquitination and leads to its degradation. Interacts with extracellular ubiquitin. Interacts with DBN1; this interaction is enhanced by antigenic stimulation. Following LPS binding, may form a complex with GDF5, HSP90AA1 and HSPA8. Phosphorylated on agonist stimulation. Rapidly phosphorylated on serine and threonine residues in the C-terminal. Phosphorylation at Ser-325 and Ser-326 leads to recruitment of ITCH, ubiquitination and protein degradation. Post-translationally, ubiquitinated after ligand binding, leading to its degradation. Ubiquitinated by ITCH at the cell membrane on agonist stimulation. The ubiquitin-dependent mechanism, endosomal sorting complex required for transport (ESCRT), then targets CXCR4 for lysosomal degradation. This process is dependent also on prior Ser-/Thr-phosphorylation in the C-terminal of CXCR4. Also binding of ARRB1 to STAM negatively regulates CXCR4 sorting to lysosomes though modulating ubiquitination of SFR5S. In terms of processing, sulfation is required for efficient binding of CXCL12/SDF-1alpha and promotes its dimerization. O- and N-glycosylated. N-glycosylation can mask coreceptor function. The O-glycosylation chondroitin sulfate attachment does not affect interaction with CXCL12/SDF-1alpha nor its coreceptor activity. In terms of tissue distribution, brain, heart, kidney, lung and liver.

The protein localises to the cell membrane. Its subcellular location is the cell junction. The protein resides in the early endosome. It is found in the late endosome. It localises to the lysosome. Functionally, receptor for the C-X-C chemokine CXCL12/SDF-1 that transduces a signal by increasing intracellular calcium ion levels and enhancing MAPK1/MAPK3 activation. Involved in the AKT signaling cascade. Plays a role in regulation of cell migration, e.g. during wound healing. Acts as a receptor for extracellular ubiquitin; leading to enhanced intracellular calcium ions and reduced cellular cAMP levels. Binds bacterial lipopolysaccharide (LPS) et mediates LPS-induced inflammatory response, including TNF secretion by monocytes. Involved in hematopoiesis and in cardiac ventricular septum formation. Also plays an essential role in vascularization of the gastrointestinal tract, probably by regulating vascular branching and/or remodeling processes in endothelial cells. Involved in cerebellar development. In the CNS, could mediate hippocampal-neuron survival. This chain is C-X-C chemokine receptor type 4 (CXCR4), found in Bos taurus (Bovine).